A 129-amino-acid chain; its full sequence is Integration host factor subunit alpha (129 aa).

Residues 87–129 (SALNGEAPPEDHAEIDAREEAAADAAEARGEDFDEEGMEDMEG) form a disordered region. A compositionally biased stretch (basic and acidic residues) spans 95 to 117 (PEDHAEIDAREEAAADAAEARGE). A compositionally biased stretch (acidic residues) spans 118–129 (DFDEEGMEDMEG).

It belongs to the bacterial histone-like protein family. As to quaternary structure, heterodimer of an alpha and a beta chain.

Its function is as follows. This protein is one of the two subunits of integration host factor, a specific DNA-binding protein that functions in genetic recombination as well as in transcriptional and translational control. It is necessary for normal cell growth and the production of carotenoids in response to light. This chain is Integration host factor subunit alpha (ihfA), found in Myxococcus xanthus.